The sequence spans 232 residues: MTNADPHELQKFSDLAHKWWDPNAEFKPLHDLNPVRLSWIDAHAHLPGKRVVDIGCGGGILSESMASLGAQVKGIDLATEALGVADLHSLESGVSVDYEAIAAEALAAREPGAYDVVTCMEMLEHVPSPANIVAACATLVKPGGWVFFSTLNRNLKSYLLAVIGAEYIAQMLPKGTHDYARFIRPSELARFVREAGLQMVEIKGIAYHPLAKRFALSNDTDVNYLVACRRGA.

The S-adenosyl-L-methionine site is built by Arg36, Gly55, Asp76, and Met120.

Belongs to the methyltransferase superfamily. UbiG/COQ3 family.

The enzyme catalyses a 3-demethylubiquinol + S-adenosyl-L-methionine = a ubiquinol + S-adenosyl-L-homocysteine + H(+). The catalysed reaction is a 3-(all-trans-polyprenyl)benzene-1,2-diol + S-adenosyl-L-methionine = a 2-methoxy-6-(all-trans-polyprenyl)phenol + S-adenosyl-L-homocysteine + H(+). The protein operates within cofactor biosynthesis; ubiquinone biosynthesis. Its function is as follows. O-methyltransferase that catalyzes the 2 O-methylation steps in the ubiquinone biosynthetic pathway. This chain is Ubiquinone biosynthesis O-methyltransferase, found in Burkholderia mallei (strain ATCC 23344).